The chain runs to 189 residues: uncharacterized protein (189 aa).

It belongs to the OsmC/Ohr family.

This is an uncharacterized protein from Methanocaldococcus jannaschii (strain ATCC 43067 / DSM 2661 / JAL-1 / JCM 10045 / NBRC 100440) (Methanococcus jannaschii).